Consider the following 231-residue polypeptide: uncharacterized protein (231 aa).

Over residues 1–10 the composition is skewed to basic and acidic residues; sequence MDGKKREVEN. A disordered region spans residues 1–35; it reads MDGKKREVENGKNGNNIKDGNSSNTTNYGKDTKTT. Residues 11-24 are compositionally biased toward low complexity; it reads GKNGNNIKDGNSSN. Polar residues predominate over residues 25–35; it reads TTNYGKDTKTT.

This is an uncharacterized protein from Aquifex aeolicus (strain VF5).